The following is a 526-amino-acid chain: Thioredoxin reductase 2, mitochondrial (526 aa).

The transit peptide at 1 to 36 directs the protein to the mitochondrion; the sequence is MAAIVAALRGSSGRFRPQTRVLTRGTRGAAGAASAA. 43-72 contacts FAD; the sequence is DLLVIGGGSGGLACAKEAAQLGRKVAVADY. Lys81 carries the N6-succinyllysine modification. Cys88 and Cys93 are joined by a disulfide. N6-succinyllysine occurs at positions 177 and 331. Catalysis depends on His499, which acts as the Proton acceptor. Residues 524–525 constitute a cross-link (cysteinyl-selenocysteine (Cys-Sec)); it reads CU. Position 525 (Sec525) is a non-standard amino acid, selenocysteine.

It belongs to the class-I pyridine nucleotide-disulfide oxidoreductase family. Homodimer. The cofactor is FAD. As to expression, expressed in liver, kidney, adrenal gland and heart.

It localises to the mitochondrion. The enzyme catalyses [thioredoxin]-dithiol + NADP(+) = [thioredoxin]-disulfide + NADPH + H(+). Functionally, involved in the control of reactive oxygen species levels and the regulation of mitochondrial redox homeostasis. Maintains mitochondrial thioredoxin in a reduced state. May play a role in redox-regulated cell signaling. In Rattus norvegicus (Rat), this protein is Thioredoxin reductase 2, mitochondrial (Txnrd2).